We begin with the raw amino-acid sequence, 90 residues long: ESAT-6-like protein EsxE (90 aa).

Belongs to the WXG100 family. ESAT-6 subfamily.

It is found in the secreted. This is ESAT-6-like protein EsxE from Mycobacterium tuberculosis (strain CDC 1551 / Oshkosh).